Consider the following 1018-residue polypeptide: UPF0182 protein Tfu_0541 (1018 aa).

A run of 7 helical transmembrane segments spans residues 20–40 (LAPV…AANF), 64–84 (ALLF…SVYF), 115–135 (VFFW…ATAE), 171–191 (VIIG…VVVH), 212–232 (VHLS…YWLE), 254–274 (AVLY…VLFF), and 287–307 (VSLG…PAIV). Disordered regions lie at residues 497–570 (YPVD…QANN) and 939–965 (GDEA…ASSD). Composition is skewed to acidic residues over residues 542-560 (QDQE…EEEQ) and 939-959 (GDEA…EEEQ).

Belongs to the UPF0182 family.

The protein resides in the cell membrane. In Thermobifida fusca (strain YX), this protein is UPF0182 protein Tfu_0541.